A 585-amino-acid chain; its full sequence is MTYHFEIDTQWCLEQLLKDGRISERDKLLIQTTHRNKEQLKWHPLQWIAHFDLKDQAHTSKPFDILRLSQWLAEKVGLPLYVIDPLKADVNMLTSVMSQEFALRNKILAVDVNPERILIGTDQPFVRDWVSNLELSLAPKKIELVLLSPDQLQRYLPEYYQVSRAVHSSKNATAYERDNKGVEALLQLGDNQNPDANDQHIVKLVDWILQFAFEQGASDIHLEPRKEKGKVRFRIDGVLHTIYHMPANTLSAVIARIKILGRLNVAEKRKPQDGRLKTRTPKGQETELRLSTLPTAFGEKLVMRIFDPDVLVRSFEQLGFDEILLKQWQALSRNSHGIILVTGPTGSGKTTTLYSSLKQLATDQVNVCTIEDPIEMLESSFNQMQVNAAIDLGFADGVRALMRQDPDIIMVGEIRDQDTANMAIQAALTGHLVLSTLHTNDAPSSLTRLHDLGVQPFLTAATLLGVLAQRLVRQLCPHCKVLSDIDKQQWQHLTQDYEIAMPEQIYGPVGCDHCRQTGYKGRIGIYEFMSLDLNLKQLVSSEANLNQLKSEAKKQGIQPLRIAGARKILEGVTSLEEVLRVVPLT.

ATP is bound at residue Gly-346–Thr-351. Cys-476, Cys-479, Cys-511, and Cys-514 together coordinate Zn(2+).

This sequence belongs to the GSP E family.

The protein localises to the cytoplasm. ATPase component of the type IV pilus (T4P). Acts as a molecular motor to provide the energy that is required for biogenesis of the pilus and the extrusion of substrates generated in the cytoplasm. TfpB is required for optimal T4P extension and, consequently, efficient natural transformation. May play a role in initiating T4P extension. The chain is Type IV pilus assembly ATPase TfpB from Acinetobacter baylyi (strain ATCC 33305 / BD413 / ADP1).